The primary structure comprises 203 residues: Proteasome subunit beta 2 (203 aa).

Residues 1 to 9 constitute a propeptide, removed in mature form; by autocatalysis; the sequence is MGEEVQIGA. Thr10 serves as the catalytic Nucleophile.

It belongs to the peptidase T1B family. The 20S proteasome core is composed of 14 alpha and 14 beta subunits that assemble into four stacked heptameric rings, resulting in a barrel-shaped structure. The two inner rings, each composed of seven catalytic beta subunits, are sandwiched by two outer rings, each composed of seven alpha subunits. The catalytic chamber with the active sites is on the inside of the barrel. Has a gated structure, the ends of the cylinder being occluded by the N-termini of the alpha-subunits. Is capped at one or both ends by the proteasome regulatory ATPase, PAN.

The protein resides in the cytoplasm. The catalysed reaction is Cleavage of peptide bonds with very broad specificity.. With respect to regulation, the formation of the proteasomal ATPase PAN-20S proteasome complex, via the docking of the C-termini of PAN into the intersubunit pockets in the alpha-rings, triggers opening of the gate for substrate entry. Interconversion between the open-gate and close-gate conformations leads to a dynamic regulation of the 20S proteasome proteolysis activity. Functionally, component of the proteasome core, a large protease complex with broad specificity involved in protein degradation. The polypeptide is Proteasome subunit beta 2 (Pyrobaculum aerophilum (strain ATCC 51768 / DSM 7523 / JCM 9630 / CIP 104966 / NBRC 100827 / IM2)).